We begin with the raw amino-acid sequence, 294 residues long: MTAVPPSCQILDGKALAQKMQGELQRDIAQLVAQGHRSPGLAVLMVGDNPASAVYVRNKEKACEKLGMVSFGKHFSADTDQETLTAAIASLNEDERVDGILVQLPLPDHLDAVKLLHTIDPSKDADGLHPVNLGHLVRGEEGLRSCTPAGVMALLAEYNLDLTGKNAVVLGRSILVGKPLALMLLEKNCTVTIAHSRTQNLADITRQADILVAAIGKPEFVTADMVKPGAIVVDVGINRLDLGEGKSTLVGDVDFAGVAPVASYLTPVPGGIGPMTVTLLLANTVASYRQRLGI.

Residues 171–173 (GRS), Ser196, and Ile237 each bind NADP(+).

The protein belongs to the tetrahydrofolate dehydrogenase/cyclohydrolase family. In terms of assembly, homodimer.

The catalysed reaction is (6R)-5,10-methylene-5,6,7,8-tetrahydrofolate + NADP(+) = (6R)-5,10-methenyltetrahydrofolate + NADPH. The enzyme catalyses (6R)-5,10-methenyltetrahydrofolate + H2O = (6R)-10-formyltetrahydrofolate + H(+). It participates in one-carbon metabolism; tetrahydrofolate interconversion. In terms of biological role, catalyzes the oxidation of 5,10-methylenetetrahydrofolate to 5,10-methenyltetrahydrofolate and then the hydrolysis of 5,10-methenyltetrahydrofolate to 10-formyltetrahydrofolate. The sequence is that of Bifunctional protein FolD from Synechocystis sp. (strain ATCC 27184 / PCC 6803 / Kazusa).